The chain runs to 154 residues: Putative ankyrin repeat protein RBE_1220 (154 aa).

ANK repeat units follow at residues 78–108 and 113–142; these read EKVNILNVAAANNSVTVINYLLDNNIFNVDQ and NSRTALHSAVKENAMESTKFLLKKEQILIL.

The protein is Putative ankyrin repeat protein RBE_1220 of Rickettsia bellii (strain RML369-C).